Here is a 141-residue protein sequence, read N- to C-terminus: Fluoride-specific ion channel FluC 1 (141 aa).

Transmembrane regions (helical) follow at residues 12–32 (LYAL…LVGV), 44–64 (WATL…AAIA), 79–99 (FVMT…LETF), and 107–127 (ALAA…AVWL). Na(+)-binding residues include G86 and T89.

The protein belongs to the fluoride channel Fluc/FEX (TC 1.A.43) family.

The protein localises to the cell inner membrane. The enzyme catalyses fluoride(in) = fluoride(out). Its activity is regulated as follows. Na(+) is not transported, but it plays an essential structural role and its presence is essential for fluoride channel function. Its function is as follows. Fluoride-specific ion channel. Important for reducing fluoride concentration in the cell, thus reducing its toxicity. The polypeptide is Fluoride-specific ion channel FluC 1 (Rhodopseudomonas palustris (strain BisB18)).